The primary structure comprises 221 residues: Vesicle-associated membrane protein 713 (221 aa).

Position 2 is an N-acetylalanine (A2). The Cytoplasmic portion of the chain corresponds to 2-190 (AIIFALVARG…RTIMWWRNVK (189 aa)). The Longin domain maps to 7–112 (LVARGTVVLS…SMNDEFSRVL (106 aa)). In terms of domain architecture, v-SNARE coiled-coil homology spans 127-187 (RMSRIKGEMS…RRYRTIMWWR (61 aa)). A helical; Anchor for type IV membrane protein transmembrane segment spans residues 191–211 (LTIALILVLALVVYIAMAFVC). The Vesicular portion of the chain corresponds to 212–221 (HGPSLPSCFK).

Belongs to the synaptobrevin family. In terms of assembly, interacts with subunits of the vacuole protein sorting (HOPS) complex including VPS11, VCL1, VPS18, VPS33, VPS39 and VPS41. As to expression, highly expressed in stems and roots. Detected in flowers and leaves.

It localises to the vacuole membrane. Its subcellular location is the prevacuolar compartment membrane. Involved in the targeting and/or fusion of transport vesicles to their target membrane. The sequence is that of Vesicle-associated membrane protein 713 from Arabidopsis thaliana (Mouse-ear cress).